We begin with the raw amino-acid sequence, 505 residues long: uncharacterized protein (505 aa).

A helical transmembrane segment spans residues 11–27 (IGIIGGGIVGWLAAIAL).

The protein resides in the membrane. This is an uncharacterized protein from Sinorhizobium fredii (strain NBRC 101917 / NGR234).